We begin with the raw amino-acid sequence, 622 residues long: Chaperone protein HscA homolog (622 aa).

The protein belongs to the heat shock protein 70 family.

Its function is as follows. Chaperone involved in the maturation of iron-sulfur cluster-containing proteins. Has a low intrinsic ATPase activity which is markedly stimulated by HscB. This is Chaperone protein HscA homolog from Burkholderia mallei (strain NCTC 10247).